Here is a 206-residue protein sequence, read N- to C-terminus: Large ribosomal subunit protein eL13z (206 aa).

The segment at 185–206 (TNKRHAGARAKRAAEAEKEEKK) is disordered. Over residues 186 to 195 (NKRHAGARAK) the composition is skewed to basic residues. Over residues 196–206 (RAAEAEKEEKK) the composition is skewed to basic and acidic residues.

This sequence belongs to the eukaryotic ribosomal protein eL13 family.

The protein localises to the cytoplasm. The sequence is that of Large ribosomal subunit protein eL13z (RPL13B) from Arabidopsis thaliana (Mouse-ear cress).